The following is a 164-amino-acid chain: Shikimate kinase (164 aa).

Position 10 to 15 (10 to 15 (GVGKTT)) interacts with ATP. A Mg(2+)-binding site is contributed by threonine 14. The substrate site is built by aspartate 28, arginine 52, and glycine 75. Arginine 116 provides a ligand contact to ATP. Arginine 134 serves as a coordination point for substrate. An ATP-binding site is contributed by arginine 151.

It belongs to the shikimate kinase family. In terms of assembly, monomer. Requires Mg(2+) as cofactor.

It is found in the cytoplasm. The catalysed reaction is shikimate + ATP = 3-phosphoshikimate + ADP + H(+). It participates in metabolic intermediate biosynthesis; chorismate biosynthesis; chorismate from D-erythrose 4-phosphate and phosphoenolpyruvate: step 5/7. In terms of biological role, catalyzes the specific phosphorylation of the 3-hydroxyl group of shikimic acid using ATP as a cosubstrate. The protein is Shikimate kinase of Streptococcus equi subsp. zooepidemicus (strain MGCS10565).